The primary structure comprises 142 residues: Large ribosomal subunit protein uL22c (142 aa).

The protein belongs to the universal ribosomal protein uL22 family. As to quaternary structure, part of the 50S ribosomal subunit.

Its subcellular location is the plastid. The protein resides in the chloroplast. Functionally, this protein binds specifically to 23S rRNA. In terms of biological role, the globular domain of the protein is located near the polypeptide exit tunnel on the outside of the subunit, while an extended beta-hairpin is found that lines the wall of the exit tunnel in the center of the 70S ribosome. In Ceratophyllum demersum (Rigid hornwort), this protein is Large ribosomal subunit protein uL22c (rpl22).